Consider the following 1071-residue polypeptide: ATP-dependent helicase/deoxyribonuclease subunit B (1071 aa).

Belongs to the helicase family. AddB/RexB type 2 subfamily. Heterodimer of AddA and RexB. The cofactor is Mg(2+).

In terms of biological role, the heterodimer acts as both an ATP-dependent DNA helicase and an ATP-dependent, dual-direction single-stranded exonuclease. Recognizes the chi site generating a DNA molecule suitable for the initiation of homologous recombination. This subunit has 5' -&gt; 3' nuclease activity but not helicase activity. The sequence is that of ATP-dependent helicase/deoxyribonuclease subunit B from Streptococcus pyogenes serotype M1.